Consider the following 209-residue polypeptide: Probable phosphatidylglycerophosphate synthase (209 aa).

A run of 4 helical transmembrane segments spans residues 32-52 (ILTL…FYGG), 105-125 (ALIG…LILT), 147-167 (WGGK…VLPL), and 171-191 (LHVA…ITGV).

This sequence belongs to the CDP-alcohol phosphatidyltransferase class-I family.

The protein resides in the cell membrane. It carries out the reaction a CDP-1,2-diacyl-sn-glycerol + sn-glycerol 3-phosphate = a 1,2-diacyl-sn-glycero-3-phospho-(1'-sn-glycero-3'-phosphate) + CMP + H(+). Its pathway is lipid metabolism; phospholipid metabolism. In terms of biological role, probably catalyzes the synthesis of phosphatidylglycerophosphate by transferring a phosphatidyl group from CDP-diacylglycerol to glycerol 3-phosphate. This is Probable phosphatidylglycerophosphate synthase from Mycobacterium tuberculosis (strain CDC 1551 / Oshkosh).